The primary structure comprises 380 residues: MLYHLLYPLAYKLSLLNVLRYPSFRIVAAGLTAMVLGLLLGPIFIERMRVLQYGSTNVREDTPDTHKKKAGTPSMGGALILASVAIATLLFADLANRFVWAALLVTLGYGAIGFTDDWLKISKKNSKGLAGKKKLVLQVLVVVVVYYACLTDWRFHVEHRFPWVFVGSYVDLHVTLPFVPSRLFNPDLGFLYLPFMVFVVIATSNAVNLTDGLDGLAIGPTVVSAMTFLALSYVAGATIAGFSLAEYLRVPYIPGAEELGVFCSAIFGAGVAFLWYNTYPASVFMGDVGSLALGGGLGMMAVLTKNEFASAILHGVFLTETVSVILQVWSFKTTGKRIFRMAPIHHHYELKGWAEPKIIVRFWIISVMLALVALLSIKLR.

The next 11 membrane-spanning stretches (helical) occupy residues 26–46, 75–95, 98–118, 135–155, 161–181, 183–203, 222–242, 259–279, 283–303, 311–331, and 357–377; these read IVAAGLTAMVLGLLLGPIFIE, MGGALILASVAIATLLFADLA, FVWAALLVTLGYGAIGFTDDW, LVLQVLVVVVVYYACLTDWRF, FPWVFVGSYVDLHVTLPFVPS, LFNPDLGFLYLPFMVFVVIAT, VVSAMTFLALSYVAGATIAGF, LGVFCSAIFGAGVAFLWYNTY, VFMGDVGSLALGGGLGMMAVL, AILHGVFLTETVSVILQVWSF, and KIIVRFWIISVMLALVALLSI.

This sequence belongs to the glycosyltransferase 4 family. MraY subfamily. The cofactor is Mg(2+).

It localises to the cell inner membrane. It carries out the reaction UDP-N-acetyl-alpha-D-muramoyl-L-alanyl-gamma-D-glutamyl-meso-2,6-diaminopimeloyl-D-alanyl-D-alanine + di-trans,octa-cis-undecaprenyl phosphate = di-trans,octa-cis-undecaprenyl diphospho-N-acetyl-alpha-D-muramoyl-L-alanyl-D-glutamyl-meso-2,6-diaminopimeloyl-D-alanyl-D-alanine + UMP. Its pathway is cell wall biogenesis; peptidoglycan biosynthesis. Functionally, catalyzes the initial step of the lipid cycle reactions in the biosynthesis of the cell wall peptidoglycan: transfers peptidoglycan precursor phospho-MurNAc-pentapeptide from UDP-MurNAc-pentapeptide onto the lipid carrier undecaprenyl phosphate, yielding undecaprenyl-pyrophosphoryl-MurNAc-pentapeptide, known as lipid I. This Anaeromyxobacter dehalogenans (strain 2CP-1 / ATCC BAA-258) protein is Phospho-N-acetylmuramoyl-pentapeptide-transferase.